An 88-amino-acid chain; its full sequence is EMBRYO SURROUNDING FACTOR 1-like protein 11 (88 aa).

An N-terminal signal peptide occupies residues 1-23; the sequence is MISSSHFAIFCIILVSLFALQQY. 4 disulfide bridges follow: cysteine 44–cysteine 59, cysteine 49–cysteine 78, cysteine 57–cysteine 74, and cysteine 60–cysteine 67.

The protein belongs to the MEG family. In terms of tissue distribution, expressed in stems.

The sequence is that of EMBRYO SURROUNDING FACTOR 1-like protein 11 (ESFL11) from Arabidopsis thaliana (Mouse-ear cress).